Here is a 405-residue protein sequence, read N- to C-terminus: 8-amino-7-oxononanoate synthase 2 (405 aa).

A substrate-binding site is contributed by arginine 20. 116–117 (GY) provides a ligand contact to pyridoxal 5'-phosphate. A substrate-binding site is contributed by histidine 141. 3 residues coordinate pyridoxal 5'-phosphate: serine 187, histidine 215, and threonine 243. An N6-(pyridoxal phosphate)lysine modification is found at lysine 246. Threonine 369 contributes to the substrate binding site.

Belongs to the class-II pyridoxal-phosphate-dependent aminotransferase family. BioF subfamily. In terms of assembly, homodimer. The cofactor is pyridoxal 5'-phosphate.

It carries out the reaction 6-carboxyhexanoyl-[ACP] + L-alanine + H(+) = (8S)-8-amino-7-oxononanoate + holo-[ACP] + CO2. It participates in cofactor biosynthesis; biotin biosynthesis. Catalyzes the decarboxylative condensation of pimeloyl-[acyl-carrier protein] and L-alanine to produce 8-amino-7-oxononanoate (AON), [acyl-carrier protein], and carbon dioxide. This chain is 8-amino-7-oxononanoate synthase 2, found in Polaromonas sp. (strain JS666 / ATCC BAA-500).